The following is a 307-amino-acid chain: Aspartate carbamoyltransferase catalytic subunit (307 aa).

Residues Arg49 and Thr50 each contribute to the carbamoyl phosphate site. Lys77 contributes to the L-aspartate binding site. Residues Arg99, His127, and Gln130 each contribute to the carbamoyl phosphate site. Positions 160 and 211 each coordinate L-aspartate. Carbamoyl phosphate contacts are provided by Ala250 and Pro251.

This sequence belongs to the aspartate/ornithine carbamoyltransferase superfamily. ATCase family. Heterododecamer (2C3:3R2) of six catalytic PyrB chains organized as two trimers (C3), and six regulatory PyrI chains organized as three dimers (R2).

It carries out the reaction carbamoyl phosphate + L-aspartate = N-carbamoyl-L-aspartate + phosphate + H(+). Its pathway is pyrimidine metabolism; UMP biosynthesis via de novo pathway; (S)-dihydroorotate from bicarbonate: step 2/3. In terms of biological role, catalyzes the condensation of carbamoyl phosphate and aspartate to form carbamoyl aspartate and inorganic phosphate, the committed step in the de novo pyrimidine nucleotide biosynthesis pathway. The polypeptide is Aspartate carbamoyltransferase catalytic subunit (Bacillus pumilus (strain SAFR-032)).